The following is a 109-amino-acid chain: Class I hydrophobin 2 (109 aa).

The first 18 residues, 1–18, serve as a signal peptide directing secretion; that stretch reads MQFKLAFVSIALATLAVA. 4 disulfides stabilise this stretch: Cys30–Cys90, Cys37–Cys84, Cys38–Cys71, and Cys91–Cys104.

This sequence belongs to the fungal hydrophobin family. As to quaternary structure, self-assembles to form functional amyloid fibrils called rodlets. Self-assembly into fibrillar rodlets occurs spontaneously at hydrophobic:hydrophilic interfaces and the rodlets further associate laterally to form amphipathic monolayers.

The protein localises to the secreted. It is found in the cell wall. Its function is as follows. Aerial growth, conidiation, and dispersal of filamentous fungi in the environment rely upon a capability of their secreting small amphipathic proteins called hydrophobins (HPBs) with low sequence identity. Class I can self-assemble into an outermost layer of rodlet bundles on aerial cell surfaces, conferring cellular hydrophobicity that supports fungal growth, development and dispersal; whereas Class II form highly ordered films at water-air interfaces through intermolecular interactions but contribute nothing to the rodlet structure. Hyd2 is a class I hydrophobin that may allow the dikaryotic mycelia to attach to the hydrophobic surface of the substrate. Higher expression in dikaryotic mycelia than in monokaryotic mycelia indicates that dikaryons require more hyd2 hydrophobin than the monokaryons, presumably for a higher rate of hyphal growth. This Lentinula edodes (Shiitake mushroom) protein is Class I hydrophobin 2.